We begin with the raw amino-acid sequence, 70 residues long: Large ribosomal subunit protein uL29 (70 aa).

The protein belongs to the universal ribosomal protein uL29 family.

In Rickettsia bellii (strain OSU 85-389), this protein is Large ribosomal subunit protein uL29.